The primary structure comprises 341 residues: Elongation factor G (341 aa).

Belongs to the GTP-binding elongation factor family. EF-G/EF-2 subfamily.

The protein localises to the cytoplasm. Its function is as follows. Catalyzes the GTP-dependent ribosomal translocation step during translation elongation. During this step, the ribosome changes from the pre-translocational (PRE) to the post-translocational (POST) state as the newly formed A-site-bound peptidyl-tRNA and P-site-bound deacylated tRNA move to the P and E sites, respectively. Catalyzes the coordinated movement of the two tRNA molecules, the mRNA and conformational changes in the ribosome. The chain is Elongation factor G (fus) from Streptomyces ramocissimus.